Reading from the N-terminus, the 410-residue chain is Cytochrome P450 monooxygenase mpsF (410 aa).

Position 355 (cysteine 355) interacts with heme.

Belongs to the cytochrome P450 family. The cofactor is heme.

It participates in secondary metabolite biosynthesis. Functionally, cytochrome P450 monooxygenase; part of the gene cluster that mediates the biosynthesis of macrophasetins, 3-decalinoyltetramic acids (DTAs) which feature a tetramate (pyrrolidine-2,4-dione) unit connected to a decalin fragment and that have potent bioactivities. The PKS-NRPS mpsA together with its associated enoylreductase partner mpsG incorporate one unit of acetyl-CoA, seven units of malonyl-CoA, and one unit of L-alanine to assemble the linear tetramic acid intermediate corresponding to the backbone of macrophasetins. Without the Diels-Alderase mpsD, the mpsA/G product can undergo the non-enzymatic intramolecular Diels-Alder (IMDA) reaction to generate both macrophasetin A and macrophasetin B. Catalyzed by mpsD, the linear tetramic acid intermediate is thoroughly converted to macrophasetin A via the endo-IMDA reaction in a regioselective and stereoselective manner. Finally, the cytochrome P450 monooxygenase mpsF catalyzes the hydroxylation at C20 to yield the end product macrophasetin C. This is Cytochrome P450 monooxygenase mpsF from Macrophomina phaseolina (strain MS6) (Charcoal rot fungus).